We begin with the raw amino-acid sequence, 338 residues long: High mobility group B protein 9 (338 aa).

The ARID domain maps to 38–129 (VKDSSVFWDT…LLFHYEQVHL (92 aa)). Residues 233 to 259 (TGRRRRRLGKRRRSRRREDPNYPKPNR) form a disordered region. Over residues 235-247 (RRRRRLGKRRRSR) the composition is skewed to basic residues. A DNA-binding region (HMG box) is located at residues 255-322 (PKPNRSGYNF…RYQRELNEYR (68 aa)).

As to expression, predominantly expressed in leaves, flowers and seedlings.

The protein resides in the nucleus. Binds preferentially DNA with A/T-rich content. Required for karyogamy during female gametophyte development, when the two polar nuclei fuse to form the diploid central cell nucleus. The chain is High mobility group B protein 9 (HMGB9) from Arabidopsis thaliana (Mouse-ear cress).